An 89-amino-acid chain; its full sequence is MTEAKKSLKRTLVGKVVSDKREKTVTVLVERRVKHPIYDKIVIKSSKYHAHDENSEYKLGDTIEITESRPLSKTKNWVATRLVQKAALV.

The protein belongs to the universal ribosomal protein uS17 family. In terms of assembly, part of the 30S ribosomal subunit.

One of the primary rRNA binding proteins, it binds specifically to the 5'-end of 16S ribosomal RNA. The protein is Small ribosomal subunit protein uS17 of Paracidovorax citrulli (strain AAC00-1) (Acidovorax citrulli).